Consider the following 246-residue polypeptide: MSQIESQNPEPVFQLKGSMLAITVMELARTNLEALDRQLAAKVAQAPNFFSNTPLILALDKLAPNEGPVDLPGLVRICRQHGLRTLAIRANRIEDIAAAIAVDLPVLPPSGARERVIDPVEAEAPKKIPEKPPEPLIKPTRVITAPVRGGQQIYAQGGDLVVVAPVSPGAELLADGNIHVYGPMRGRALAGIKGDTKARIFCQQLSAELISIAGQYKVSEDLRRDPLWGSPVQISLSGDVLNIIRL.

Belongs to the MinC family. As to quaternary structure, interacts with MinD and FtsZ.

Functionally, cell division inhibitor that blocks the formation of polar Z ring septums. Rapidly oscillates between the poles of the cell to destabilize FtsZ filaments that have formed before they mature into polar Z rings. Prevents FtsZ polymerization. This is Probable septum site-determining protein MinC from Pseudomonas syringae pv. syringae (strain B728a).